Reading from the N-terminus, the 379-residue chain is UDP-4-amino-4-deoxy-L-arabinose--oxoglutarate aminotransferase (379 aa).

Lys-182 carries the post-translational modification N6-(pyridoxal phosphate)lysine.

It belongs to the DegT/DnrJ/EryC1 family. ArnB subfamily. In terms of assembly, homodimer. The cofactor is pyridoxal 5'-phosphate.

It carries out the reaction UDP-4-amino-4-deoxy-beta-L-arabinose + 2-oxoglutarate = UDP-beta-L-threo-pentopyranos-4-ulose + L-glutamate. It participates in nucleotide-sugar biosynthesis; UDP-4-deoxy-4-formamido-beta-L-arabinose biosynthesis; UDP-4-deoxy-4-formamido-beta-L-arabinose from UDP-alpha-D-glucuronate: step 2/3. It functions in the pathway bacterial outer membrane biogenesis; lipopolysaccharide biosynthesis. Its function is as follows. Catalyzes the conversion of UDP-4-keto-arabinose (UDP-Ara4O) to UDP-4-amino-4-deoxy-L-arabinose (UDP-L-Ara4N). The modified arabinose is attached to lipid A and is required for resistance to polymyxin and cationic antimicrobial peptides. The chain is UDP-4-amino-4-deoxy-L-arabinose--oxoglutarate aminotransferase from Klebsiella pneumoniae (strain 342).